We begin with the raw amino-acid sequence, 223 residues long: UPF0441 protein YgiB (223 aa).

Residues 178 to 195 (TVPKTAMAPKPATTTTVT) are compositionally biased toward low complexity. Residues 178 to 223 (TVPKTAMAPKPATTTTVTRGGFGESVAKQSTMQRSAAGTSTRSMGG) are disordered. Positions 204–223 (AKQSTMQRSAAGTSTRSMGG) are enriched in polar residues.

It belongs to the UPF0441 family.

In Salmonella enteritidis PT4 (strain P125109), this protein is UPF0441 protein YgiB.